Consider the following 276-residue polypeptide: NADPH-dependent 7-cyano-7-deazaguanine reductase (276 aa).

Residue 83-85 (IES) participates in substrate binding. An NADPH-binding site is contributed by 85 to 86 (SK). Catalysis depends on Cys-184, which acts as the Thioimide intermediate. The active-site Proton donor is Asp-191. 223–224 (HE) serves as a coordination point for substrate. 252 to 253 (RG) contacts NADPH.

The protein belongs to the GTP cyclohydrolase I family. QueF type 2 subfamily. In terms of assembly, homodimer.

The protein localises to the cytoplasm. It carries out the reaction 7-aminomethyl-7-carbaguanine + 2 NADP(+) = 7-cyano-7-deazaguanine + 2 NADPH + 3 H(+). The protein operates within tRNA modification; tRNA-queuosine biosynthesis. Functionally, catalyzes the NADPH-dependent reduction of 7-cyano-7-deazaguanine (preQ0) to 7-aminomethyl-7-deazaguanine (preQ1). The protein is NADPH-dependent 7-cyano-7-deazaguanine reductase of Pseudomonas fluorescens (strain ATCC BAA-477 / NRRL B-23932 / Pf-5).